The following is a 234-amino-acid chain: Acetylxylan esterase 2 (234 aa).

An N-terminal signal peptide occupies residues 1–17 (MHSKFFAASLLGLGAAA). Positions 18 to 27 (IPLEGVMEKR) are excised as a propeptide. Intrachain disulfides connect Cys-29/Cys-106 and Cys-73/Cys-79. The active site involves Ser-117. Disulfide bonds link Cys-128-Cys-188, Cys-174-Cys-206, and Cys-198-Cys-205. The active site involves Asp-202. N-linked (GlcNAc...) asparagine glycosylation occurs at Asn-207. The active site involves His-214.

Belongs to the cutinase family. Acetylxylan esterase subfamily. As to quaternary structure, monomer.

Its subcellular location is the secreted. It carries out the reaction Deacetylation of xylans and xylo-oligosaccharides.. The protein operates within glycan degradation; xylan degradation. Functionally, degrades acetylated xylans by cleaving acetyl side groups from the hetero-xylan backbone. The protein is Acetylxylan esterase 2 (axe-2) of Talaromyces purpureogenus (Soft rot fungus).